A 28-amino-acid polypeptide reads, in one-letter code: Kappa-stichotoxin-Shd1a/kappa-stichotoxin-Shd1b (28 aa).

Pro6 is modified (4-hydroxyproline; in form SHTX-1 (Shd1a)). Intrachain disulfides connect Cys7-Cys19 and Cys10-Cys25.

This sequence belongs to the sea anemone BBH family. Post-translationally, occurs in 2 forms which differ in the post-translational modification of Pro-6. In form SHTX-1 (Shd1a) Pro-6 is a hydroxyproline while in form SHTX-2 (Shd1b) Pro-6 is unmodified.

The protein localises to the secreted. The protein resides in the nematocyst. Functionally, kappa-stichotoxin-Shd1a: inhibits voltage-gated potassium channels (Kv). In terms of biological role, kappa-stichotoxin-Shd1b: inhibits voltage-gated potassium channels (Kv). This toxin inhibits the binding of 125I-alpha-dendrotoxin to synaptosomal membranes (IC(50)=270 nM). This chain is Kappa-stichotoxin-Shd1a/kappa-stichotoxin-Shd1b, found in Stichodactyla haddoni (Saddle carpet anemone).